Here is a 1042-residue protein sequence, read N- to C-terminus: Atrial natriuretic peptide-converting enzyme (1042 aa).

A disordered region spans residues 1-25; that stretch reads MKQSPALAPEERCRRAGSPKPVLRA. Over 1 to 45 the chain is Cytoplasmic; that stretch reads MKQSPALAPEERCRRAGSPKPVLRADDNNMGNGCSQKLATANLLR. The DDNN motif signature appears at 26–29; it reads DDNN. A helical; Signal-anchor for type II membrane protein transmembrane segment spans residues 46–66; sequence FLLLVLIPCICALVLLLVILL. Over 67–1042 the chain is Extracellular; sequence SYVGTLQKVY…QIYIQTFLLN (976 aa). 4 N-linked (GlcNAc...) asparagine glycosylation sites follow: Asn-80, Asn-104, Asn-135, and Asn-141. Positions 134 to 259 constitute an FZ 1 domain; it reads RNTSACMNIT…SNVSRICFSP (126 aa). 8 disulfides stabilise this stretch: Cys-139–Cys-199, Cys-147–Cys-192, Cys-183–Cys-223, Cys-212–Cys-256, Cys-216–Cys-240, Cys-269–Cys-282, Cys-277–Cys-295, and Cys-289–Cys-304. N-linked (GlcNAc...) asparagine glycosylation is found at Asn-231, Asn-245, and Asn-251. LDL-receptor class A domains follow at residues 268 to 304, 305 to 340, 341 to 377, and 378 to 415; these read LCGRGENFLCASGICIPGKLQCNGYNDCDDWSDEAHC, NCSENLFHCHTGKCLNYSLVCDGYDDCGDLSDEQNC, DCNPTTEHRCGDGRCIAMEWVCDGDHDCVDKSDEVNC, and SCHSQGLVECRNGQCIPSTFQCDGDEDCKDGSDEENCS. A glycan (N-linked (GlcNAc...) asparagine) is linked at Asn-305. 9 cysteine pairs are disulfide-bonded: Cys-306/Cys-318, Cys-313/Cys-331, Cys-325/Cys-340, Cys-342/Cys-355, Cys-350/Cys-368, Cys-362/Cys-377, Cys-379/Cys-392, Cys-387/Cys-405, and Cys-399/Cys-414. The N-linked (GlcNAc...) asparagine glycan is linked to Asn-320. N-linked (GlcNAc...) asparagine glycosylation is present at Asn-376. Residues Asn-413, Asn-446, Asn-451, and Asn-469 are each glycosylated (N-linked (GlcNAc...) asparagine). Residues 450 to 573 form the FZ 2 domain; sequence NNCSQCEPIT…NSDNQTCLMP (124 aa). 14 disulfide bridges follow: Cys-455/Cys-518, Cys-463/Cys-511, Cys-502/Cys-540, Cys-529/Cys-570, Cys-533/Cys-557, Cys-580/Cys-592, Cys-587/Cys-605, Cys-599/Cys-614, Cys-616/Cys-630, Cys-624/Cys-643, Cys-637/Cys-652, Cys-655/Cys-667, Cys-662/Cys-680, and Cys-674/Cys-689. Asn-567 carries an N-linked (GlcNAc...) asparagine glycan. LDL-receptor class A domains lie at 579 to 614, 615 to 653, and 654 to 689; these read ECSPSHFKCRSGQCVLASRRCDGQADCDDDSDEENC, GCKERDLWECPSNKQCLKHTVICDGFPDCPDYMDEKNCS, and FCQDDELECANHACVSRDLWCDGEADCSDSSDEWDC. Asn-651 is a glycosylation site (N-linked (GlcNAc...) asparagine). An SRCR domain is found at 690-801; that stretch reads VTLSINVNSS…RRPAARMNKR (112 aa). 2 N-linked (GlcNAc...) asparagine glycosylation sites follow: Asn-697 and Asn-761. Disulfide bonds link Cys-790/Cys-912, Cys-828/Cys-844, Cys-926/Cys-991, Cys-955/Cys-970, and Cys-981/Cys-1010. Positions 802–1035 constitute a Peptidase S1 domain; sequence ILGGRTSRPG…FVEWIKRQIY (234 aa). Active-site charge relay system residues include His-843 and Asp-892. The Charge relay system role is filled by Ser-985. Asn-1022 carries N-linked (GlcNAc...) asparagine glycosylation.

Belongs to the peptidase S1 family. N-glycosylated; required for processing and activation. In terms of processing, activated through proteolytic processing by a trypsin-like protease; cleaved into a N-terminal propeptide and an activated corin protease fragment. Different soluble forms are produced by cleavage and autocatalytic cleavage: Atrial natriuretic peptide-converting enzyme, 180 kDa soluble fragment is produced by cleavage by ADAM10, while 160 kDa and 100 kDa soluble fragments are produced by autocatalytic cleavage. Cleavage by ADAM10 to produce soluble 180 kDa soluble fragment takes place after the transmembrane region and before FZ 1. Post-translationally, a disulfide bond links the activated corin protease fragment and the N-terminal propeptide. The disulfide bond also links the activated corin protease fragment with soluble fragments (100 kDa, 160 kDa and 180 kDa fragments). As to expression, highly expressed in heart. Expressed in heart myocytes. Also expressed in pregnant uterus. Detected in blood, in plasma as well as in serum (at protein level).

The protein localises to the cell membrane. Its subcellular location is the secreted. Its activity is regulated as follows. Inhibited in a dose-dependent manner by non-specific trypsin-like serine protease inhibitors including benzamidine. Its function is as follows. Serine-type endopeptidase involved in atrial natriuretic peptide (NPPA) and brain natriuretic peptide (NPPB) processing. Converts through proteolytic cleavage the non-functional propeptides NPPA and NPPB into their active hormones, ANP and BNP(1-32) respectively, thereby regulating blood pressure in the heart and promoting natriuresis, diuresis and vasodilation. Proteolytic cleavage of pro-NPPA also plays a role in female pregnancy by promoting trophoblast invasion and spiral artery remodeling in uterus. Also acts as a regulator of sodium reabsorption in kidney. Has weaker endopeptidase activity compared to isoform 1. This is Atrial natriuretic peptide-converting enzyme (CORIN) from Homo sapiens (Human).